The primary structure comprises 138 residues: Large ribosomal subunit protein uL16 (138 aa).

A compositionally biased stretch (basic residues) spans 1–16 (MLIPRRVKHRKQHHPG). Positions 1-25 (MLIPRRVKHRKQHHPGRSGQATGGT) are disordered.

Belongs to the universal ribosomal protein uL16 family. In terms of assembly, part of the 50S ribosomal subunit.

Functionally, binds 23S rRNA and is also seen to make contacts with the A and possibly P site tRNAs. The sequence is that of Large ribosomal subunit protein uL16 from Renibacterium salmoninarum (strain ATCC 33209 / DSM 20767 / JCM 11484 / NBRC 15589 / NCIMB 2235).